A 214-amino-acid chain; its full sequence is MPDFKIVISDPQSVEPKRIKVKVKASDQVKSITGEKDGKAVPQAKVNEKTKQLLNVDTLLTLEITKQEGDKKVKVKGHFKVDVDNSVPDNEVWISKTMAEKFGAEDFEAFAYRTKTLQISVDQNKATNLVGLKIGDVFEANQLIGLPVKLKITGGSDNSGFPMRFDVIGAAKRKILLSGPPGFYPNENGERRRKTIRGNTISQEIVQINTIIVR.

This sequence belongs to the eukaryotic ribosomal protein eS6 family.

The protein is Small ribosomal subunit protein eS6 of Saccharolobus solfataricus (strain ATCC 35092 / DSM 1617 / JCM 11322 / P2) (Sulfolobus solfataricus).